Here is an 801-residue protein sequence, read N- to C-terminus: PR domain zinc finger protein 4 (801 aa).

The 118-residue stretch at 412–529 (KQLVLRQSIV…PENELLFYYS (118 aa)) folds into the SET domain. The C2H2-type 1; atypical zinc-finger motif lies at 545–566 (HLCNCGKECNSYTEFKAHLTSH). 4 consecutive C2H2-type zinc fingers follow at residues 618–640 (HKCD…LKIH), 646–668 (YRCT…MVIH), 674–696 (LKCD…VLIH), and 702–724 (IKCP…LNSH). The C2H2-type 6; atypical zinc-finger motif lies at 730-752 (YVCEKCTKAYLTKYHLTRHLKTC). Residues 751–782 (TCKGPTSSSSAPEEEEEDDSEEEDLADSVGTE) form a disordered region. A compositionally biased stretch (acidic residues) spans 762-776 (PEEEEEDDSEEEDLA).

This sequence belongs to the class V-like SAM-binding methyltransferase superfamily. In terms of tissue distribution, expressed in many tissues. Highly expressed in ovary, testis, pancreas, brain, heart and prostate.

It localises to the nucleus. Functionally, may function as a transcription factor involved in cell differentiation. The sequence is that of PR domain zinc finger protein 4 (PRDM4) from Homo sapiens (Human).